The chain runs to 788 residues: Choline transporter-like protein 1 (788 aa).

Residues 98–118 (FLFFVFLCGWVVVASLGIMWG) traverse the membrane as a helical segment. An N-linked (GlcNAc...) asparagine glycan is attached at Asn276. A run of 4 helical transmembrane segments spans residues 329–349 (WWQT…WTVI), 352–372 (LLGS…LGFG), 409–429 (FVVA…ILFI), and 458–478 (LFPF…AIWL). Asn497 carries an N-linked (GlcNAc...) asparagine glycan. A run of 5 helical transmembrane segments spans residues 531 to 551 (LFAF…ALAG), 583 to 603 (LGSI…RVML), 620 to 640 (WFLM…KFLT), 679 to 699 (AGIL…ILSF), and 718 to 738 (YYFV…DLFF).

This sequence belongs to the CTL (choline transporter-like) family.

It localises to the membrane. The chain is Choline transporter-like protein 1 (chtl-1) from Caenorhabditis briggsae.